The following is a 379-amino-acid chain: Bifunctional riboflavin kinase/FMN phosphatase (379 aa).

Serine 2 carries the N-acetylserine modification. The active-site Nucleophile; for FMN phosphatase activity is aspartate 17. 2 residues coordinate Mg(2+): aspartate 17 and aspartate 19. Residue aspartate 19 is the Proton donor; for FMN phosphatase activity of the active site. ATP is bound by residues glycine 248, lysine 254, threonine 260, and asparagine 262. Position 260 (threonine 260) interacts with Mg(2+). Residue glutamate 312 is the Nucleophile; for riboflavin kinase activity of the active site. Leucine 315, histidine 317, and tyrosine 324 together coordinate ATP. FMN-binding residues include arginine 337 and phenylalanine 342.

In the N-terminal section; belongs to the HAD-like hydrolase superfamily. CbbY/CbbZ/Gph/YieH family. The protein in the C-terminal section; belongs to the flavokinase family. Monomer. Mg(2+) serves as cofactor.

The enzyme catalyses riboflavin + ATP = FMN + ADP + H(+). The catalysed reaction is FMN + H2O = riboflavin + phosphate. It participates in cofactor biosynthesis; FMN biosynthesis; FMN from riboflavin (ATP route): step 1/1. In terms of biological role, bifunctional enzyme that catalyzes the hydrolysis of flavin-mononucleotide (FMN) to riboflavin (vitamin B2) and the phosphorylation of riboflavin to form (FMN) coenzyme. This is Bifunctional riboflavin kinase/FMN phosphatase from Arabidopsis thaliana (Mouse-ear cress).